The primary structure comprises 224 residues: Prothoracicotropic hormone (224 aa).

A signal peptide spans 1-29 (MITRPIILVILCYAILMIVQSFVPKAVAL). 3 cysteine pairs are disulfide-bonded: Cys-132/Cys-169, Cys-155/Cys-211, and Cys-163/Cys-213. N-linked (GlcNAc...) asparagine glycosylation is present at Asn-156.

In terms of assembly, homodimer; disulfide-linked. As to expression, PTTH is synthesized by two dorsolateral neurosecretory cells of the Bombyx brain.

In terms of biological role, PTTH is a brain secretory polypeptide of insects which stimulates the prothoracic glands to produce and release ecdysone, the steroid essential to insect development. Functionally, peptides P2K and P6K are presumed to be cleaved post-translationally and may play some unknown physiologically or developmentally important functions. The sequence is that of Prothoracicotropic hormone from Bombyx mori (Silk moth).